Consider the following 484-residue polypeptide: Glutamate--tRNA ligase (484 aa).

The 'HIGH' region motif lies at 11 to 21; sequence PSPTGLLHIGN. A 'KMSKS' region motif is present at residues 255–259; the sequence is KLSKR. Residue K258 participates in ATP binding.

This sequence belongs to the class-I aminoacyl-tRNA synthetase family. Glutamate--tRNA ligase type 1 subfamily. Monomer.

The protein resides in the cytoplasm. It catalyses the reaction tRNA(Glu) + L-glutamate + ATP = L-glutamyl-tRNA(Glu) + AMP + diphosphate. Functionally, catalyzes the attachment of glutamate to tRNA(Glu) in a two-step reaction: glutamate is first activated by ATP to form Glu-AMP and then transferred to the acceptor end of tRNA(Glu). The polypeptide is Glutamate--tRNA ligase (Streptococcus suis (strain 98HAH33)).